A 379-amino-acid polypeptide reads, in one-letter code: Homoserine O-acetyltransferase (379 aa).

Residues 54 to 332 (NAILVCHALS…PYQSEEIVKS (279 aa)) enclose the AB hydrolase-1 domain. Ser159 functions as the Nucleophile in the catalytic mechanism. Arg228 serves as a coordination point for substrate. Active-site residues include Asp318 and His352. Substrate is bound at residue Asp353.

The protein belongs to the AB hydrolase superfamily. MetX family. As to quaternary structure, homodimer.

The protein resides in the cytoplasm. It carries out the reaction L-homoserine + acetyl-CoA = O-acetyl-L-homoserine + CoA. Its pathway is amino-acid biosynthesis; L-methionine biosynthesis via de novo pathway; O-acetyl-L-homoserine from L-homoserine: step 1/1. Transfers an acetyl group from acetyl-CoA to L-homoserine, forming acetyl-L-homoserine. This is Homoserine O-acetyltransferase from Leptospira meyeri.